The primary structure comprises 328 residues: Phenylalanine--tRNA ligase alpha subunit (328 aa).

This sequence belongs to the class-II aminoacyl-tRNA synthetase family. Phe-tRNA synthetase alpha subunit type 1 subfamily. In terms of assembly, tetramer of two alpha and two beta subunits. It depends on Mg(2+) as a cofactor.

It localises to the cytoplasm. The catalysed reaction is tRNA(Phe) + L-phenylalanine + ATP = L-phenylalanyl-tRNA(Phe) + AMP + diphosphate + H(+). The chain is Phenylalanine--tRNA ligase alpha subunit from Buchnera aphidicola subsp. Baizongia pistaciae (strain Bp).